Reading from the N-terminus, the 186-residue chain is Proline-rich protein 3 (186 aa).

The segment at 1–97 (MPKRKKQNQP…LGPRSSPYGR (97 aa)) is disordered. Pro residues-rich tracts occupy residues 33-44 (MGPPSLLGPPPM) and 67-79 (MIPPLLSLPPPPR). Residues 153–181 (KSDRPVCRHFSKKGHCRYEDHCAFYHPGV) form a C3H1-type zinc finger.

This Rattus norvegicus (Rat) protein is Proline-rich protein 3 (Prr3).